A 132-amino-acid chain; its full sequence is uncharacterized protein (132 aa).

4 helical membrane-spanning segments follow: residues leucine 7–phenylalanine 29, valine 44–leucine 62, leucine 69–valine 88, and glycine 108–phenylalanine 130.

The protein resides in the cell membrane. This is an uncharacterized protein from Aquifex aeolicus (strain VF5).